Consider the following 210-residue polypeptide: Ribosomal RNA small subunit methyltransferase G (210 aa).

Residues Gly-80, Leu-85, 131 to 132, and Arg-146 each bind S-adenosyl-L-methionine; that span reads VE.

It belongs to the methyltransferase superfamily. RNA methyltransferase RsmG family.

It localises to the cytoplasm. It carries out the reaction guanosine(527) in 16S rRNA + S-adenosyl-L-methionine = N(7)-methylguanosine(527) in 16S rRNA + S-adenosyl-L-homocysteine. Functionally, specifically methylates the N7 position of guanine in position 527 of 16S rRNA. The sequence is that of Ribosomal RNA small subunit methyltransferase G from Pasteurella multocida (strain Pm70).